A 906-amino-acid polypeptide reads, in one-letter code: Eukaryotic translation initiation factor 3 subunit C (906 aa).

The interval 1–22 (MSRFFANGSDSESESSEEEVQA) is disordered. A compositionally biased stretch (acidic residues) spans 11–20 (SESESSEEEV). Phosphoserine is present on residues Ser34, Ser165, Ser176, and Ser185. The disordered stretch occupies residues 158-283 (REAPDQESEA…KRPEDDEDGE (126 aa)). Acidic residues predominate over residues 162-186 (DQESEAEDEEAAQDSDGGDAGDDSD). Positions 195 to 209 (EAAPKVAKTVPAKAA) are enriched in low complexity. A compositionally biased stretch (acidic residues) spans 211–237 (ADDDDSDDSIDWDSDSETETESSDDEN). The span at 242–270 (MRERFLKRTTEKEEKDDDKRKDKRKEQKI) shows a compositional bias: basic and acidic residues. The 177-residue stretch at 641-817 (FHMHINLELL…ETVVMHRSEP (177 aa)) folds into the PCI domain. Disordered regions lie at residues 853-873 (GNMGNRGDRGYNRNQDGNWGG) and 887-906 (QRGRKHQQQQQQQVQTIDEE). The segment covering 894–906 (QQQQQQVQTIDEE) has biased composition (low complexity).

It belongs to the eIF-3 subunit C family. As to quaternary structure, component of the eukaryotic translation initiation factor 3 (eIF-3) complex. The eIF-3 complex interacts with pix.

It localises to the cytoplasm. Functionally, component of the eukaryotic translation initiation factor 3 (eIF-3) complex, which is involved in protein synthesis of a specialized repertoire of mRNAs and, together with other initiation factors, stimulates binding of mRNA and methionyl-tRNAi to the 40S ribosome. The eIF-3 complex specifically targets and initiates translation of a subset of mRNAs involved in cell proliferation. The protein is Eukaryotic translation initiation factor 3 subunit C of Drosophila ananassae (Fruit fly).